Here is a 346-residue protein sequence, read N- to C-terminus: Putative agmatine deiminase (346 aa).

Residue C333 is the Amidino-cysteine intermediate of the active site.

Belongs to the agmatine deiminase family.

The catalysed reaction is agmatine + H2O = N-carbamoylputrescine + NH4(+). This Legionella pneumophila (strain Paris) protein is Putative agmatine deiminase.